Reading from the N-terminus, the 524-residue chain is Na(+)/H(+) antiporter NhaB (524 aa).

A run of 9 helical transmembrane segments spans residues 13–33 (FLGN…IINP), 98–118 (LLLV…LFVF), 140–160 (AFLS…SVSV), 239–259 (FFIR…LVCL), 304–324 (AIIG…VGLV), 325–345 (GLSV…HSLG), 358–378 (LTVF…TPII), 448–468 (ATPN…APLI), and 479–499 (ALPY…FLLV).

Belongs to the NhaB Na(+)/H(+) (TC 2.A.34) antiporter family.

The protein localises to the cell inner membrane. It carries out the reaction 2 Na(+)(in) + 3 H(+)(out) = 2 Na(+)(out) + 3 H(+)(in). In terms of biological role, na(+)/H(+) antiporter that extrudes sodium in exchange for external protons. The chain is Na(+)/H(+) antiporter NhaB from Yersinia pseudotuberculosis serotype O:3 (strain YPIII).